A 233-amino-acid polypeptide reads, in one-letter code: Lipoprotein-releasing system ATP-binding protein LolD (233 aa).

Positions 6 to 233 (LQCDNLCKRY…TAELSLMGAE (228 aa)) constitute an ABC transporter domain. 42–49 (GSSGSGKS) is a binding site for ATP.

Belongs to the ABC transporter superfamily. Lipoprotein translocase (TC 3.A.1.125) family. As to quaternary structure, the complex is composed of two ATP-binding proteins (LolD) and two transmembrane proteins (LolC and LolE).

It is found in the cell inner membrane. In terms of biological role, part of the ABC transporter complex LolCDE involved in the translocation of mature outer membrane-directed lipoproteins, from the inner membrane to the periplasmic chaperone, LolA. Responsible for the formation of the LolA-lipoprotein complex in an ATP-dependent manner. Such a release is dependent of the sorting-signal (absence of an Asp at position 2 of the mature lipoprotein) and of LolA. In Escherichia coli (strain K12), this protein is Lipoprotein-releasing system ATP-binding protein LolD.